The chain runs to 348 residues: Dihydroorotase (348 aa).

The Zn(2+) site is built by His-17 and His-19. Residues 19–21 (HLR) and Asn-45 each bind substrate. Zn(2+) contacts are provided by Lys-103, His-140, and His-178. An N6-carboxylysine modification is found at Lys-103. His-140 contributes to the substrate binding site. Leu-223 provides a ligand contact to substrate. A Zn(2+)-binding site is contributed by Asp-251. Asp-251 is a catalytic residue. Substrate is bound by residues His-255 and Ala-267.

This sequence belongs to the metallo-dependent hydrolases superfamily. DHOase family. Class II DHOase subfamily. Homodimer. Zn(2+) serves as cofactor.

The enzyme catalyses (S)-dihydroorotate + H2O = N-carbamoyl-L-aspartate + H(+). Its pathway is pyrimidine metabolism; UMP biosynthesis via de novo pathway; (S)-dihydroorotate from bicarbonate: step 3/3. Catalyzes the reversible cyclization of carbamoyl aspartate to dihydroorotate. This is Dihydroorotase from Shigella sonnei (strain Ss046).